A 256-amino-acid polypeptide reads, in one-letter code: Spheroidene monooxygenase (256 aa).

The segment covering 1-23 (MTNELSNAAGASQQGPAASSFSA) has biased composition (low complexity). Residues 1-26 (MTNELSNAAGASQQGPAASSFSADTP) form a disordered region.

This sequence belongs to the CrtA family. Heme is required as a cofactor.

The enzyme catalyses spheroidene + 4 reduced [2Fe-2S]-[ferredoxin] + 2 O2 + 4 H(+) = spheroiden-2-one + 4 oxidized [2Fe-2S]-[ferredoxin] + 3 H2O. The catalysed reaction is spirilloxanthin + 4 reduced [2Fe-2S]-[ferredoxin] + 2 O2 + 4 H(+) = 2-oxospirilloxanthin + 4 oxidized [2Fe-2S]-[ferredoxin] + 3 H2O. It carries out the reaction 2-oxospirilloxanthin + 4 reduced [2Fe-2S]-[ferredoxin] + 2 O2 + 4 H(+) = 2,2'-dioxospirilloxanthin + 4 oxidized [2Fe-2S]-[ferredoxin] + 3 H2O. It catalyses the reaction spheroidene + 2 reduced [2Fe-2S]-[ferredoxin] + O2 + 2 H(+) = 2-hydroxyspheroidene + 2 oxidized [2Fe-2S]-[ferredoxin] + H2O. The enzyme catalyses 2-hydroxyspheroidene + 2 reduced [2Fe-2S]-[ferredoxin] + O2 + 2 H(+) = 2,2-dihydroxyspheroidene + 2 oxidized [2Fe-2S]-[ferredoxin] + H2O. The catalysed reaction is 2,2-dihydroxyspheroidene = spheroiden-2-one + H2O. It carries out the reaction spirilloxanthin + 2 reduced [2Fe-2S]-[ferredoxin] + O2 + 2 H(+) = 2-hydroxyspirilloxanthin + 2 oxidized [2Fe-2S]-[ferredoxin] + H2O. It catalyses the reaction 2-hydroxyspirilloxanthin + 2 reduced [2Fe-2S]-[ferredoxin] + O2 + 2 H(+) = 2,2-dihydroxyspirilloxanthin + 2 oxidized [2Fe-2S]-[ferredoxin] + H2O. The enzyme catalyses 2,2-dihydroxyspirilloxanthin = 2-oxospirilloxanthin + H2O. The catalysed reaction is 2-oxospirilloxanthin + 2 reduced [2Fe-2S]-[ferredoxin] + O2 + 2 H(+) = 2'-hydroxy-2-oxospirilloxanthin + 2 oxidized [2Fe-2S]-[ferredoxin] + H2O. It carries out the reaction 2'-hydroxy-2-oxospirilloxanthin + 2 reduced [2Fe-2S]-[ferredoxin] + O2 + 2 H(+) = 2',2'-dihydroxy-2-oxospirilloxanthin + 2 oxidized [2Fe-2S]-[ferredoxin] + H2O. It catalyses the reaction 2',2'-dihydroxy-2-oxospirilloxanthin = 2,2'-dioxospirilloxanthin + H2O. Its pathway is carotenoid biosynthesis; spheroidene biosynthesis. The protein operates within carotenoid biosynthesis; spirilloxanthin biosynthesis. Involved in the biosynthesis of the carotenoids spheroidene and spirilloxanthin. Catalyzes the introduction of one keto group at the C-2 position of spheroidene and two keto groups at the C-2 and C-2' positions of spirilloxanthin. In Rubrivivax gelatinosus (Rhodocyclus gelatinosus), this protein is Spheroidene monooxygenase.